We begin with the raw amino-acid sequence, 133 residues long: ATP synthase epsilon chain (133 aa).

It belongs to the ATPase epsilon chain family. In terms of assembly, F-type ATPases have 2 components, CF(1) - the catalytic core - and CF(0) - the membrane proton channel. CF(1) has five subunits: alpha(3), beta(3), gamma(1), delta(1), epsilon(1). CF(0) has three main subunits: a, b and c.

It is found in the cell membrane. Functionally, produces ATP from ADP in the presence of a proton gradient across the membrane. The polypeptide is ATP synthase epsilon chain (atpC) (Mycoplasma genitalium (strain ATCC 33530 / DSM 19775 / NCTC 10195 / G37) (Mycoplasmoides genitalium)).